The following is a 440-amino-acid chain: Putative epoxide hydrolase (440 aa).

The interval 1–21 (MTKTLAEQPGEGAAPVSPSPS) is disordered. The segment at residues 1–49 (MTKTLAEQPGEGAAPVSPSPSRRALLHGAAGLGALAAGAAVAGPGLAFA) is a signal peptide (tat-type signal).

The protein belongs to the peptidase S33 family. Post-translationally, predicted to be exported by the Tat system. The position of the signal peptide cleavage has not been experimentally proven.

The catalysed reaction is an epoxide + H2O = an ethanediol. This is Putative epoxide hydrolase from Stigmatella aurantiaca (strain DW4/3-1).